The primary structure comprises 878 residues: Glycogen [starch] synthase (878 aa).

A UDP-alpha-D-glucose-binding site is contributed by lysine 61. Disordered stretches follow at residues 637 to 721 and 746 to 878; these read PPKP…NVIP and NEFK…KSLK. Composition is skewed to low complexity over residues 641-656 and 666-676; these read ISRSPSPSPSSSLKLS and QQQQQQQQPQP. Residues 677 to 692 show a composition bias toward polar residues; it reads IGTTINLIPPSSNVSV. Composition is skewed to low complexity over residues 693-715, 746-781, 795-830, and 838-878; these read TPTTTPTTTTTATTATTAPITTP, NEFKKQQQQQQQSKTPTTPTTTSTTTTTPSTTAAAT, PNTSSFIPTNKGSTATTTTTTATPTPTPSNNTNGKP, and TKSN…KSLK.

The protein belongs to the glycosyltransferase 3 family.

The enzyme catalyses [(1-&gt;4)-alpha-D-glucosyl](n) + UDP-alpha-D-glucose = [(1-&gt;4)-alpha-D-glucosyl](n+1) + UDP + H(+). It functions in the pathway glycan biosynthesis; glycogen biosynthesis. In terms of biological role, catalyzes the formation of apha-1,4 glycosidic bonds adding glucose residue from UDPG to the growing chain of glycogen. The sequence is that of Glycogen [starch] synthase (glcS) from Dictyostelium discoideum (Social amoeba).